The sequence spans 147 residues: Angiogenin (147 aa).

The signal sequence occupies residues 1–24 (MVMGLGVLLLVFVLGLGLTPPTLA). A Pyrrolidone carboxylic acid modification is found at Q25. The active-site Proton acceptor is H37. R45 and D46 together coordinate tRNA. 3 disulfides stabilise this stretch: C50-C105, C63-C116, and C81-C131. A Nucleolar localization signal motif is present at residues 55–59 (RRRGL). 2 residues coordinate tRNA: C105 and V127. Residue H138 is the Proton donor of the active site.

It belongs to the pancreatic ribonuclease family. As to quaternary structure, homodimer. Interacts with RNH1; inhibiting ANG ribonuclease activity. Interacts with PCNA.

The protein resides in the secreted. The protein localises to the nucleus. It localises to the nucleolus. It is found in the cytoplasm. Its subcellular location is the stress granule. Has weak tRNA ribonuclease activity by itself due to partial autoinhibition by its C-terminus, which folds into a short alpha-helix that partially occludes the substrate-binding site. In absence of stress, the ribonuclease activity is inhibited by RNH1 in the cytoplasm. In response to stress, dissociates from RNH1 in the cytoplasm and associates with cytoplasmic ribosomes with vacant A-sites: ribosomes directly activate the tRNA ribonuclease activity of ANG by refolding the C-terminal alpha-helix. In response to stress, the angiogenic activity of ANG is inhibited by RNH1 in the nucleus. In terms of biological role, secreted ribonuclease that can either promote or restrict cell proliferation of target cells, depending on the context. Endocytosed in target cells via its receptor PLXNB2 and translocates to the cytoplasm or nucleus. Under stress conditions, localizes to the cytoplasm and promotes the assembly of stress granules (SGs): specifically cleaves a subset of tRNAs within anticodon loops to produce tRNA-derived stress-induced fragments (tiRNAs), resulting in translation repression and inhibition of cell proliferation. tiRNas also prevent formation of apoptosome, thereby promoting cell survival. Preferentially cleaves RNAs between a pyrimidine and an adenosine residue, suggesting that it cleaves the anticodon loop of tRNA(Ala) (32-UUAGCAU-38) after positions 33 and 36. Cleaves a subset of tRNAs, including tRNA(Ala), tRNA(Glu), tRNA(Gly), tRNA(Lys), tRNA(Val), tRNA(His), tRNA(Asp) and tRNA(Sec). Under growth conditions and in differentiated cells, translocates to the nucleus and stimulates ribosomal RNA (rRNA) transcription, including that containing the initiation site sequences of 45S rRNA, thereby promoting cell growth and proliferation. Angiogenin induces vascularization of normal and malignant tissues via its ability to promote rRNA transcription. Involved in hematopoietic stem and progenitor cell (HSPC) growth and survival by promoting rRNA transcription in growth conditions and inhibiting translation in response to stress, respectively. Mediates the crosstalk between myeloid and intestinal epithelial cells to protect the intestinal epithelial barrier integrity: secreted by myeloid cells and promotes intestinal epithelial cells proliferation and survival. Also mediates osteoclast-endothelial cell crosstalk in growing bone: produced by osteoclasts and protects the neighboring vascular cells against senescence by promoting rRNA transcription. In Pan troglodytes (Chimpanzee), this protein is Angiogenin (ANG).